Consider the following 628-residue polypeptide: MTTDTKATETRAFEADVSRLLHMMVHSVYSDKDVFLRELISNAADACEKLRFEAVSRPELLGDDPKPRISISADPDNKEITVEDNGIGMSRDDMAEALGTIARSGTRAFIERVGSGTEDTQLIGQFGVGFYSAFMVADRVDVISRLAGSEEAWRWSSDGKGSYEIAPAPLEAAPRRGTRVVLHLMDDAVSYTGSYRLEQLAKSQSGHVPVPITLIEKPGAEARDIADGTALWVRPKSEIKPEEYTDFYRSVAGQYDEPAATIHFRAEGRQEYSVLAFVPGSRPFDLFDQDRKGRMKLYVRRVFITDDADLLPRYLRFVRGLVDSADLPLNVSREMIQESPLLASIRKGLTNRVLGDLAKLAENEAEAYAKVWENFGVVLKEGLYEDYERREQLLKLARFHSTASGEGWRGLADYVAAMKEGQKAIFFMAGDDRARLEASPQLEGFKARGIEVLLLTDPVDSFWVTMAPDFDGKPFKSVTQGVAELSDIPLLDDAKKPDTAAAPEVDGFLAFVKSALGDAVSDVKASDRLTESAVCLVAPEHGPDRQFERLMNAAGRLDKAAKPILEINPRHERVLALAGLGDEDQAFKDDAAHLLYDEARVLDGDKPADARAFSERLARLIARGIAKG.

The segment at 1–333 is a; substrate-binding; the sequence is MTTDTKATET…SADLPLNVSR (333 aa). The segment at 334–549 is b; the sequence is EMIQESPLLA…EHGPDRQFER (216 aa). Positions 550-628 are c; the sequence is LMNAAGRLDK…RLIARGIAKG (79 aa).

It belongs to the heat shock protein 90 family. As to quaternary structure, homodimer.

The protein resides in the cytoplasm. Functionally, molecular chaperone. Has ATPase activity. In Mesorhizobium japonicum (strain LMG 29417 / CECT 9101 / MAFF 303099) (Mesorhizobium loti (strain MAFF 303099)), this protein is Chaperone protein HtpG.